A 241-amino-acid polypeptide reads, in one-letter code: Small ribosomal subunit protein uS2 (241 aa).

The protein belongs to the universal ribosomal protein uS2 family.

In Proteus mirabilis (strain HI4320), this protein is Small ribosomal subunit protein uS2.